Here is a 1183-residue protein sequence, read N- to C-terminus: PAN2-PAN3 deadenylation complex catalytic subunit PAN2 (1183 aa).

2 WD repeats span residues 150-189 (SIENSSPVVKLAPLHRTVLAAGLSGQVTVLDPRTGFKAAQ) and 289-328 (DVSSYITSMALSSRGDYLAFGDGDGQLHVWTTNETGENAA). The tract at residues 331–478 (ENGSIVLPPF…EEIEEELNDG (148 aa)) is linker. The segment at 439–470 (AEGRARGKGRRDSGPRFRSEKDKKGTYKDKEE) is disordered. Over residues 448–469 (RRDSGPRFRSEKDKKGTYKDKE) the composition is skewed to basic and acidic residues. In terms of domain architecture, USP spans 479–864 (EVPKYYRKVE…VPAVIILERE (386 aa)). Residues 916-1085 (VAIDAEFVAL…HDSIEDAHFA (170 aa)) form the Exonuclease domain. Positions 919, 921, 1028, and 1081 each coordinate a divalent metal cation. The tract at residues 1155–1183 (KSRMATPPPPTKLGLPQWASQNSPSPLRR) is disordered. The span at 1172–1183 (WASQNSPSPLRR) shows a compositional bias: polar residues.

The protein belongs to the peptidase C19 family. PAN2 subfamily. In terms of assembly, forms a heterotrimer with an asymmetric homodimer of the regulatory subunit PAN3 to form the poly(A)-nuclease (PAN) deadenylation complex. A divalent metal cation serves as cofactor.

The protein resides in the cytoplasm. The enzyme catalyses Exonucleolytic cleavage of poly(A) to 5'-AMP.. Positively regulated by the regulatory subunit PAN3. Functionally, catalytic subunit of the poly(A)-nuclease (PAN) deadenylation complex, one of two cytoplasmic mRNA deadenylases involved in mRNA turnover. PAN specifically shortens poly(A) tails of RNA and the activity is stimulated by poly(A)-binding protein PAB1. PAN deadenylation is followed by rapid degradation of the shortened mRNA tails by the CCR4-NOT complex. Deadenylated mRNAs are then degraded by two alternative mechanisms, namely exosome-mediated 3'-5' exonucleolytic degradation, or deadenylation-dependent mRNA decaping and subsequent 5'-3' exonucleolytic degradation by XRN1. May also be involved in post-transcriptional maturation of mRNA poly(A) tails. The protein is PAN2-PAN3 deadenylation complex catalytic subunit PAN2 of Cryptococcus neoformans var. neoformans serotype D (strain B-3501A) (Filobasidiella neoformans).